Here is a 260-residue protein sequence, read N- to C-terminus: Diphthine synthase (260 aa).

S-adenosyl-L-methionine is bound by residues Leu9, Asp85, Ile88, 113–114, Leu168, Ala202, and His227; that span reads TA.

It belongs to the diphthine synthase family. Homodimer.

The enzyme catalyses 2-[(3S)-amino-3-carboxypropyl]-L-histidyl-[translation elongation factor 2] + 3 S-adenosyl-L-methionine = diphthine-[translation elongation factor 2] + 3 S-adenosyl-L-homocysteine + 3 H(+). It participates in protein modification; peptidyl-diphthamide biosynthesis. In terms of biological role, S-adenosyl-L-methionine-dependent methyltransferase that catalyzes the trimethylation of the amino group of the modified target histidine residue in translation elongation factor 2 (EF-2), to form an intermediate called diphthine. The three successive methylation reactions represent the second step of diphthamide biosynthesis. The polypeptide is Diphthine synthase (Haloquadratum walsbyi (strain DSM 16790 / HBSQ001)).